A 500-amino-acid polypeptide reads, in one-letter code: Matrilin-1 (500 aa).

Positions 1 to 29 (MKVTSGPAFALCSLLLLLLLLLQVPDSLS) are cleaved as a signal peptide. One can recognise a VWFA 1 domain in the interval 30-226 (LVPQPRGHLC…AKKFQEAFCV (197 aa)). N-linked (GlcNAc...) asparagine glycosylation is present at Asn80. Positions 227–267 (VSDLCATGDHDCEQLCVSSPGSYTCACHEGFTLNSDGKTCN) constitute an EGF-like domain. Cystine bridges form between Cys231–Cys242, Cys238–Cys251, and Cys253–Cys266. Residues 268 to 457 (VCRGGGSGSA…GKKLQKQICV (190 aa)) enclose the VWFA 2 domain. Asn348 carries an N-linked (GlcNAc...) asparagine glycan. Positions 471-499 (EAKVEGLLQALTRKLEAVSGRLAVLENRI) form a coiled coil.

In terms of assembly, homotrimer. Part of a complex composed of MATN1 (via VWFA1 domain), type 2 collagens and type 6 collagens. Forms a complex (via covalent bonds) with ACAN; the interaction increases in abundance with increasing age of the organism via an increase in occupancy of MATN1 binding sites. Interacts with COMP. N-glycosylated; reduces binding affinity for type 2 collagens. In terms of tissue distribution, expressed in femoral head articular cartilage. Expressed in the trachea and extraskeletal tissue around the eye.

The protein resides in the secreted. It localises to the extracellular space. Its subcellular location is the extracellular matrix. Functionally, a major component of the extracellular matrix of non-articular cartilage. Binds to type 2 collagens and forms long concatenated protein networks as part of the extracellular matrix. Required for the network-like organization and bundling of collagen fibrils surrounding chondrocytes in the zones of maturation and hypertrophy. Required for mechanotransduction and adaption to mechanical loading in cartilage chondrocytes, resulting in an increase in expression of the extracellular matrix components ACAN and COL2A1. Acts as a moderator of angiogenesis in response to injury. The sequence is that of Matrilin-1 from Mus musculus (Mouse).